Consider the following 199-residue polypeptide: 7-methyl-GTP pyrophosphatase (199 aa).

Asp74 functions as the Proton acceptor in the catalytic mechanism.

This sequence belongs to the Maf family. YceF subfamily. It depends on a divalent metal cation as a cofactor.

It localises to the cytoplasm. The catalysed reaction is N(7)-methyl-GTP + H2O = N(7)-methyl-GMP + diphosphate + H(+). Nucleoside triphosphate pyrophosphatase that hydrolyzes 7-methyl-GTP (m(7)GTP). May have a dual role in cell division arrest and in preventing the incorporation of modified nucleotides into cellular nucleic acids. This Cupriavidus metallidurans (strain ATCC 43123 / DSM 2839 / NBRC 102507 / CH34) (Ralstonia metallidurans) protein is 7-methyl-GTP pyrophosphatase.